We begin with the raw amino-acid sequence, 189 residues long: Cyclin-dependent kinase inhibitor 5 (189 aa).

Residues 73 to 93 show a composition bias toward polar residues; sequence KQQKQQLIPSVNQCQTKNPRA. Residues 73–107 form a disordered region; that stretch reads KQQKQQLIPSVNQCQTKNPRASSGPAKKLEPDTTT.

It belongs to the CDI family. ICK/KRP subfamily. As to quaternary structure, interacts with CYCD4-1. Does not interact with CDKA-1. In terms of tissue distribution, expressed in flowers and at lower levels in roots and leaves.

It localises to the nucleus. The protein resides in the nucleoplasm. Functionally, inhibits CYCD2-1/CDKA-1 complex kinase activity without interaction with the complex. The chain is Cyclin-dependent kinase inhibitor 5 (KRP5) from Arabidopsis thaliana (Mouse-ear cress).